The chain runs to 264 residues: 3-methyl-2-oxobutanoate hydroxymethyltransferase (264 aa).

Mg(2+)-binding residues include Asp45 and Asp84. 3-methyl-2-oxobutanoate contacts are provided by residues 45–46 (DS), Asp84, and Lys113. Glu115 serves as a coordination point for Mg(2+). Glu182 (proton acceptor) is an active-site residue.

The protein belongs to the PanB family. Homodecamer; pentamer of dimers. The cofactor is Mg(2+).

The protein resides in the cytoplasm. It catalyses the reaction 3-methyl-2-oxobutanoate + (6R)-5,10-methylene-5,6,7,8-tetrahydrofolate + H2O = 2-dehydropantoate + (6S)-5,6,7,8-tetrahydrofolate. It functions in the pathway cofactor biosynthesis; (R)-pantothenate biosynthesis; (R)-pantoate from 3-methyl-2-oxobutanoate: step 1/2. Functionally, catalyzes the reversible reaction in which hydroxymethyl group from 5,10-methylenetetrahydrofolate is transferred onto alpha-ketoisovalerate to form ketopantoate. This chain is 3-methyl-2-oxobutanoate hydroxymethyltransferase, found in Helicobacter hepaticus (strain ATCC 51449 / 3B1).